The sequence spans 148 residues: Hemoglobin subunit beta-4 (148 aa).

Positions 3-148 constitute a Globin domain; that stretch reads DWTDPERSAI…VVSALGRQYH (146 aa). 2 residues coordinate heme b: His-64 and His-93.

It belongs to the globin family. Heterotetramer of two alpha chains and two beta chains. Red blood cells.

Involved in oxygen transport from gills to the various peripheral tissues. In Oncorhynchus mykiss (Rainbow trout), this protein is Hemoglobin subunit beta-4 (hbb4).